The chain runs to 496 residues: Glycerol kinase (496 aa).

Thr11 provides a ligand contact to ADP. Positions 11, 12, and 13 each coordinate ATP. Thr11 is a sn-glycerol 3-phosphate binding site. An ADP-binding site is contributed by Arg15. Sn-glycerol 3-phosphate is bound by residues Arg81, Glu82, Tyr133, and Asp242. Residues Arg81, Glu82, Tyr133, Asp242, and Gln243 each contribute to the glycerol site. The ADP site is built by Thr264 and Gly307. ATP contacts are provided by Thr264, Gly307, Gln311, and Gly408. 2 residues coordinate ADP: Gly408 and Asn412.

The protein belongs to the FGGY kinase family.

It catalyses the reaction glycerol + ATP = sn-glycerol 3-phosphate + ADP + H(+). The protein operates within polyol metabolism; glycerol degradation via glycerol kinase pathway; sn-glycerol 3-phosphate from glycerol: step 1/1. Its activity is regulated as follows. Inhibited by fructose 1,6-bisphosphate (FBP). Functionally, key enzyme in the regulation of glycerol uptake and metabolism. Catalyzes the phosphorylation of glycerol to yield sn-glycerol 3-phosphate. This Aromatoleum aromaticum (strain DSM 19018 / LMG 30748 / EbN1) (Azoarcus sp. (strain EbN1)) protein is Glycerol kinase.